The sequence spans 64 residues: DNA gyrase inhibitor YacG (64 aa).

The Zn(2+) site is built by cysteine 10, cysteine 13, cysteine 29, and cysteine 33.

This sequence belongs to the DNA gyrase inhibitor YacG family. As to quaternary structure, interacts with GyrB. It depends on Zn(2+) as a cofactor.

Inhibits all the catalytic activities of DNA gyrase by preventing its interaction with DNA. Acts by binding directly to the C-terminal domain of GyrB, which probably disrupts DNA binding by the gyrase. The polypeptide is DNA gyrase inhibitor YacG (Pectobacterium atrosepticum (strain SCRI 1043 / ATCC BAA-672) (Erwinia carotovora subsp. atroseptica)).